A 572-amino-acid chain; its full sequence is MSTEANKPRGNQHQEAKSDAEIAQAAFMRPIVDVAAEKLGIAAEHLAPYGHYKAKIDLNYLSSLDSRPDGKLVLVTAISPTPAGEGKTTTTVGLTDALNHIGKKAVACLREPSLGPCFGVKGGAAGGGYAQVVPMEDINLHFTGDFHAIGAANNLLAALIDNHVYWGNELGIDPRRIGWRRAVDMNDRALRSIVSSLGGVSNGYPREDGFDITVASEVMAIFCLATDLDDLQRRLGNIIVGHTKDRKPIRASELSAAGSMAVLLKDAIAPNLVQTLEHNPAFIHGGPFANIAHGCNSVIATRAALKLSDYVVTEAGFGADLGAEKFFDIKCRKAGLSPSAVVIVATVRALKMHGGVAKDALKTENVEAVQKGFANLERHIQNVRKFGVPVVVGVNKFSADTDAEFQMLHDLCAKMGVPCVSSDHWANGGAGAADLAHEVVKLVEGGSADFKPLYPEDMPLWDKLRTIATEIYGASDITADAAVRKRFDELQKEGFGHLPICVAKTQYSFSTDANLRGAPSGHVIPVRDLRLSAGAEFVVAICGDIMTMPGLPKVPAANAIRLASNGTIAGLF.

81-88 (TPAGEGKT) is a binding site for ATP.

This sequence belongs to the formate--tetrahydrofolate ligase family.

It carries out the reaction (6S)-5,6,7,8-tetrahydrofolate + formate + ATP = (6R)-10-formyltetrahydrofolate + ADP + phosphate. Its pathway is one-carbon metabolism; tetrahydrofolate interconversion. This chain is Formate--tetrahydrofolate ligase, found in Granulibacter bethesdensis (strain ATCC BAA-1260 / CGDNIH1).